Reading from the N-terminus, the 152-residue chain is Cytochrome c-type biogenesis protein CcmE (152 aa).

At 1-8 the chain is on the cytoplasmic side; the sequence is MQARRKTR. A helical; Signal-anchor for type II membrane protein membrane pass occupies residues 9 to 29; the sequence is LYIVLAVLAGLGLTVSLTLYA. Over 30-152 the chain is Periplasmic; it reads LSSNIDLFYT…MTPEKTGAQP (123 aa). Heme contacts are provided by His-130 and Tyr-134. Residues 133 to 152 form a disordered region; it reads NYTPPEVKNAMTPEKTGAQP.

The protein belongs to the CcmE/CycJ family.

It is found in the cell inner membrane. Its function is as follows. Heme chaperone required for the biogenesis of c-type cytochromes. Transiently binds heme delivered by CcmC and transfers the heme to apo-cytochromes in a process facilitated by CcmF and CcmH. The chain is Cytochrome c-type biogenesis protein CcmE from Klebsiella pneumoniae (strain 342).